The chain runs to 138 residues: Putative pre-16S rRNA nuclease (138 aa).

Belongs to the YqgF nuclease family.

It localises to the cytoplasm. In terms of biological role, could be a nuclease involved in processing of the 5'-end of pre-16S rRNA. The protein is Putative pre-16S rRNA nuclease of Haemophilus ducreyi (strain 35000HP / ATCC 700724).